A 244-amino-acid polypeptide reads, in one-letter code: Small ribosomal subunit protein uS3 (244 aa).

In terms of domain architecture, KH type-2 spans Val-39–Arg-107. The disordered stretch occupies residues Val-213–Arg-244. Residues Glu-216–Arg-244 show a composition bias toward basic and acidic residues.

The protein belongs to the universal ribosomal protein uS3 family. As to quaternary structure, part of the 30S ribosomal subunit. Forms a tight complex with proteins S10 and S14.

Its function is as follows. Binds the lower part of the 30S subunit head. Binds mRNA in the 70S ribosome, positioning it for translation. The sequence is that of Small ribosomal subunit protein uS3 from Xanthomonas oryzae pv. oryzae (strain MAFF 311018).